The following is a 191-amino-acid chain: Protein GrpE (191 aa).

Positions 1–19 (MKDEHNQKHDHLSQKEPES) are enriched in basic and acidic residues. Positions 1 to 44 (MKDEHNQKHDHLSQKEPESYQKACACKEQQDEEMQEAGEKEGEI) are disordered.

The protein belongs to the GrpE family. Homodimer.

It localises to the cytoplasm. In terms of biological role, participates actively in the response to hyperosmotic and heat shock by preventing the aggregation of stress-denatured proteins, in association with DnaK and GrpE. It is the nucleotide exchange factor for DnaK and may function as a thermosensor. Unfolded proteins bind initially to DnaJ; upon interaction with the DnaJ-bound protein, DnaK hydrolyzes its bound ATP, resulting in the formation of a stable complex. GrpE releases ADP from DnaK; ATP binding to DnaK triggers the release of the substrate protein, thus completing the reaction cycle. Several rounds of ATP-dependent interactions between DnaJ, DnaK and GrpE are required for fully efficient folding. The polypeptide is Protein GrpE (Helicobacter pylori (strain G27)).